A 312-amino-acid chain; its full sequence is Tetraacyldisaccharide 4'-kinase (312 aa).

60–67 (IAGGSGKT) contributes to the ATP binding site.

It belongs to the LpxK family.

The enzyme catalyses a lipid A disaccharide + ATP = a lipid IVA + ADP + H(+). It functions in the pathway glycolipid biosynthesis; lipid IV(A) biosynthesis; lipid IV(A) from (3R)-3-hydroxytetradecanoyl-[acyl-carrier-protein] and UDP-N-acetyl-alpha-D-glucosamine: step 6/6. Functionally, transfers the gamma-phosphate of ATP to the 4'-position of a tetraacyldisaccharide 1-phosphate intermediate (termed DS-1-P) to form tetraacyldisaccharide 1,4'-bis-phosphate (lipid IVA). The protein is Tetraacyldisaccharide 4'-kinase of Helicobacter pylori (strain HPAG1).